The primary structure comprises 26 residues: Stage V sporulation protein M (26 aa).

The interval 3–9 is important for localization; the sequence is FYTIKLP.

As to quaternary structure, interacts with SpoIVA. May interact with the ATP-dependent protease FtsH.

The protein localises to the forespore outer membrane. Functionally, coordinates cortex and coat assembly during sporulation. Associates with the spore coat protein SpoIVA and with the outer forespore membrane, thereby serving as a membrane anchor that tethers SpoIVA and the entire spore coat to the forespore surface. May also serve as a competitive inhibitor of FtsH activity during sporulation. This Bacillus subtilis (strain 168) protein is Stage V sporulation protein M.